Here is a 304-residue protein sequence, read N- to C-terminus: D-alanine--D-alanine ligase (304 aa).

In terms of domain architecture, ATP-grasp spans 104–299 (KMVWLSCGLP…FEALCLAILA (196 aa)). Residue 130 to 185 (ARDLGLPIFVKPVHEGSSMGATKVTEAGQLRAAWELAARYDSLVIAEEFISGQELT) coordinates ATP. Mg(2+) is bound by residues Asp-253, Glu-266, and Asn-268.

It belongs to the D-alanine--D-alanine ligase family. Mg(2+) serves as cofactor. The cofactor is Mn(2+).

Its subcellular location is the cytoplasm. It carries out the reaction 2 D-alanine + ATP = D-alanyl-D-alanine + ADP + phosphate + H(+). It participates in cell wall biogenesis; peptidoglycan biosynthesis. Functionally, cell wall formation. The protein is D-alanine--D-alanine ligase of Azoarcus sp. (strain BH72).